Consider the following 626-residue polypeptide: MSRFVTSVSALAMLALAPAALSSGAYANDKLVELSKSDDNWVMPGKNYDSNNFSDLKQINKGNVKQLRPAWTFSTGLLNGHEGAPLVVDGKMYIHTSFPNNTFALGLDDPGTILWQDKPKQNPAARAVACCDLVNRGLAYWPGDGKTPALILKTQLDGNVAALNAETGETVWKVENSDIKVGSTLTIAPYVVKDKVIIGSSGAELGVRGYLTAYDVKTGEQVWRAYATGPDKDLLLASDFNIKNPHYGQKGLGTGTWEGDAWKIGGGTNWGWYAYDPGTNLIYFGTGNPAPWNETMRPGDNKWTMTIFGRDADTGEAKFGYQKTPHDEWDYAGVNVMMLSEQKDKDGKARKLLTHPDRNGIVYTLDRTDGALVSANKLDDTVNVFKSVDLKTGQPVRDPEYGTRMDHLAKDICPSAMGYHNQGHDSYDPKRELFFMGINHICMDWEPFMLPYRAGQFFVGATLNMYPGPKGDRQNYEGLGQIKAYNAITGDYKWEKMERFAVWGGTMATAGDLVFYGTLDGYLKARDSDTGDLLWKFKIPSGAIGYPMTYTHKGTQYVAIYYGVGGWPGVGLVFDLADPTAGLGAVGAFKKLANYTQMGGGVVVFSLDGKGPYDDPNVGEWKSAAK.

The signal sequence occupies residues 1–27 (MSRFVTSVSALAMLALAPAALSSGAYA). Residues cysteine 130 and cysteine 131 are joined by a disulfide bond. Glutamate 204 and asparagine 288 together coordinate Ca(2+). Aspartate 330 functions as the Proton acceptor in the catalytic mechanism. A disulfide bond links cysteine 413 and cysteine 442.

The protein belongs to the bacterial PQQ dehydrogenase family. In terms of assembly, heterotetramer composed of 2 alpha and 2 beta subunits. Pyrroloquinoline quinone is required as a cofactor. Ca(2+) serves as cofactor.

The protein localises to the cell inner membrane. It catalyses the reaction 2 Fe(III)-[cytochrome cL] + a primary alcohol = 2 Fe(II)-[cytochrome cL] + an aldehyde + 2 H(+). In terms of biological role, catalyzes the oxidation of primary alcohols including methanol. This chain is Methanol dehydrogenase [cytochrome c] subunit 1 (moxF), found in Methylorubrum extorquens (strain ATCC 14718 / DSM 1338 / JCM 2805 / NCIMB 9133 / AM1) (Methylobacterium extorquens).